Reading from the N-terminus, the 55-residue chain is Large ribosomal subunit protein bL33 (55 aa).

The protein belongs to the bacterial ribosomal protein bL33 family.

The protein is Large ribosomal subunit protein bL33 of Renibacterium salmoninarum (strain ATCC 33209 / DSM 20767 / JCM 11484 / NBRC 15589 / NCIMB 2235).